Consider the following 245-residue polypeptide: 8-amino-3,8-dideoxy-manno-octulosonate cytidylyltransferase (245 aa).

The protein belongs to the KdsB family.

The protein resides in the cytoplasm. The enzyme catalyses 8-amino-3,8-dideoxy-alpha-D-manno-octulosonate + CTP = CMP-8-amino-3,8-dideoxy-alpha-D-manno-oct-2-ulosonate + diphosphate. It participates in bacterial outer membrane biogenesis; lipopolysaccharide biosynthesis. Functionally, activates KDO8N (a required 8-carbon sugar) for incorporation into bacterial lipopolysaccharide in the Shewanella genus. This is 8-amino-3,8-dideoxy-manno-octulosonate cytidylyltransferase from Shewanella baltica (strain OS185).